The sequence spans 222 residues: Cysteine protease inhibitor 1 (222 aa).

The signal sequence occupies residues 1 to 26; it reads MKSINILSFLLLSSTLSLVAFARSFT. A propeptide spanning residues 27–42 is cleaved from the precursor; sequence SENPIVLPTTCHDDDN. The Vacuolar targeting signal motif lies at 29 to 34; it reads NPIVLP. Intrachain disulfides connect cysteine 84–cysteine 136 and cysteine 185–cysteine 191.

This sequence belongs to the protease inhibitor I3 (leguminous Kunitz-type inhibitor) family. As to expression, tubers, leaves.

It localises to the vacuole. Potent inhibitor of cathepsin l (cysteine protease). Does not inhibit trypsin or chymotrypsin (serine proteases). May protect the plant by inhibiting proteases of invading organisms. The polypeptide is Cysteine protease inhibitor 1 (Solanum tuberosum (Potato)).